Here is a 62-residue protein sequence, read N- to C-terminus: Large ribosomal subunit protein bL32 (62 aa).

This sequence belongs to the bacterial ribosomal protein bL32 family.

The chain is Large ribosomal subunit protein bL32 from Treponema denticola (strain ATCC 35405 / DSM 14222 / CIP 103919 / JCM 8153 / KCTC 15104).